Reading from the N-terminus, the 105-residue chain is Large ribosomal subunit protein uL24 (105 aa).

This sequence belongs to the universal ribosomal protein uL24 family. In terms of assembly, part of the 50S ribosomal subunit.

In terms of biological role, one of two assembly initiator proteins, it binds directly to the 5'-end of the 23S rRNA, where it nucleates assembly of the 50S subunit. One of the proteins that surrounds the polypeptide exit tunnel on the outside of the subunit. In Rhodospirillum centenum (strain ATCC 51521 / SW), this protein is Large ribosomal subunit protein uL24.